The following is a 773-amino-acid chain: MAPKTLYEKIFDSHLVHEEADGTCLIYIDRHLVHEVTSPQAFEGLRNANRKVRRTDCTLATVDHNIPTASRKSYRDTKSFVEQVDSRTQCMTLEENVKAFGLTFFGLSDNRQGIVHIIGPEQGFTLPGATIVCGDSHTSTHGAFGALAFGIGTSEVEHVLATQTLLQKRAKNMLIQVDGELSQGVTSKDIILHIIGLIGTAGGTGHVIEYAGSTIRSLSMEARMSICNMSIEAGARAGLIAPDEITYEYIKGRPLAPKQGEAWDQALAYWKTLPSDEGAQYDTVIKIDAKDIPPTVTWGTSPQDVVAITGTVPDPKNASNEAEAKAWTRALEYMGLEAGTPMEKIKIDKVFIGSCTNARIEDLRAAARVLHGRKVADGLYCMLVPGSGLVKKQAEAEGLDKIFQAAGFDWREAGCSMCLGMNPDQLAPGERCASTSNRNFEGRQGAGGRTHLMSPAMAAACAVTGYLTDVRKVVGHSSAKVGSDAAKPAFEIEVSDAKSYLVDATPAPAPTNVAAAGAGALTDEDALRDVPASHISSSGGGMEKFTTLTGIAAPLERSNVDTDLIIPKQFLKTIKRTGLGSALFWPLRYDAKTGEPDPAFVLNQKPYDQSKILVVTGPNFGCGSSREHAAWSLLDFGIRAVIAESFGDIFRNNLTKNGQLPVVLSRAQIQRLTQDAKAGKQITVDLVDQLVITADGKEKFSFETPEFTRHCLINGLDDIALTLQRDAQIGAFERNRSTHTPWLDGFGYHANSNSSSLLDSAKPLVNNVTATDW.

[4Fe-4S] cluster is bound by residues cysteine 355, cysteine 415, and cysteine 418.

The protein belongs to the aconitase/IPM isomerase family. In terms of assembly, monomer. Requires [4Fe-4S] cluster as cofactor.

It catalyses the reaction (2R,3S)-3-isopropylmalate = (2S)-2-isopropylmalate. It functions in the pathway amino-acid biosynthesis; L-leucine biosynthesis; L-leucine from 3-methyl-2-oxobutanoate: step 2/4. In terms of biological role, catalyzes the isomerization between 2-isopropylmalate and 3-isopropylmalate, via the formation of 2-isopropylmaleate. This is 3-isopropylmalate dehydratase (LEU1) from Mycosarcoma maydis (Corn smut fungus).